The sequence spans 227 residues: Germin-like protein 3-5 (227 aa).

The first 29 residues, 1-29 (MEYGFKAAGLVFVVLLLQQAPVLIRATDA), serve as a signal peptide directing secretion. An intrachain disulfide couples cysteine 36 to cysteine 51. The 153-residue stretch at 65–217 (SKIATGGDVN…ALRVDAGVVE (153 aa)) folds into the Cupin type-1 domain. N-linked (GlcNAc...) asparagine glycans are attached at residues asparagine 78 and asparagine 81. 4 residues coordinate Mn(2+): histidine 114, histidine 116, glutamate 121, and histidine 163.

Belongs to the germin family. As to quaternary structure, oligomer (believed to be a pentamer but probably hexamer).

The protein localises to the secreted. It is found in the extracellular space. Its subcellular location is the apoplast. In terms of biological role, may play a role in plant defense. Probably has no oxalate oxidase activity even if the active site is conserved. This Oryza sativa subsp. japonica (Rice) protein is Germin-like protein 3-5.